The sequence spans 365 residues: MSRPVPKPGILDIAPYTPGKSPVPEAGRKVFKLSANETPFGPSPHAIAAYKSAADHLEDYPEGTSRVLREAIGRAYGLDPDRIICGAGSDEILNLLAHTYLGPGDEAISSQHGFLVYPIATLANGATNVVAPEKDLTTDVDAILSKVTPNTKLVWLANPNNPTGTYIPFDEVKRLRAGLPSHVVLVLDAAYADYVSKNDYEIGIELVSTTDNTVLTHTFSKVHGLASLRIGWMFGPANIVDAVNRIRGPFNTSIPAQLAAVAAIQDTAHVDMSRVHTEKWRDRLTEEFTKLGLTVTPSVCNFVLMHFPTTAGKTAADADAFLTKRGLVLRALGNYKLPHALRMTIGTDEANELVIAALTEFMAKP.

Lys-221 is subject to N6-(pyridoxal phosphate)lysine.

Belongs to the class-II pyridoxal-phosphate-dependent aminotransferase family. Histidinol-phosphate aminotransferase subfamily. As to quaternary structure, homodimer. Pyridoxal 5'-phosphate is required as a cofactor.

It carries out the reaction L-histidinol phosphate + 2-oxoglutarate = 3-(imidazol-4-yl)-2-oxopropyl phosphate + L-glutamate. The protein operates within amino-acid biosynthesis; L-histidine biosynthesis; L-histidine from 5-phospho-alpha-D-ribose 1-diphosphate: step 7/9. The sequence is that of Histidinol-phosphate aminotransferase from Rhodopseudomonas palustris (strain HaA2).